The primary structure comprises 293 residues: MATTREIRRRIRSIKNTAQITKAMQMVAASKMRKAQQRAIEGRPYHSLFQEIVHSLIPQAGQLIHPLLEARAIQKEIVFVIGTDKGLCGPLNTNLLREIYKHHSPNHLYVSMGKKVRNYLSGLKGSRGENLLLADFELKDNLTFREAKRIGHFLIEKYLHKEIDAISIAYSHFVNPLIQKPIYRRIAPISKVELVKKEKAESPPAESVLPFNFEPSAEELLESLLPFYIHWEIYQAILDNLASEHSARMVAMKSATENAKSLLQDLSLEYNKARQESITKEILEISTAQYAMG.

This sequence belongs to the ATPase gamma chain family. F-type ATPases have 2 components, CF(1) - the catalytic core - and CF(0) - the membrane proton channel. CF(1) has five subunits: alpha(3), beta(3), gamma(1), delta(1), epsilon(1). CF(0) has three main subunits: a, b and c.

It is found in the cell membrane. Functionally, produces ATP from ADP in the presence of a proton gradient across the membrane. The gamma chain is believed to be important in regulating ATPase activity and the flow of protons through the CF(0) complex. The chain is ATP synthase gamma chain from Methylacidiphilum infernorum (isolate V4) (Methylokorus infernorum (strain V4)).